Here is a 76-residue protein sequence, read N- to C-terminus: UPF0346 protein LBA0976 (76 aa).

The protein belongs to the UPF0346 family.

This chain is UPF0346 protein LBA0976, found in Lactobacillus acidophilus (strain ATCC 700396 / NCK56 / N2 / NCFM).